Consider the following 114-residue polypeptide: MGSRPCALGLFCCCSSCFCLCCPRHRPVSRLAAAVGGAAAVPAVVSGVTGLILSPSQSPIFIQPTPSPPMSPLRPGLDLVFANPPDHSAPLGVTRPSAPPLPHVVDLPQLGPRR.

The interval 1 to 28 is membrane association; that stretch reads MGSRPCALGLFCCCSSCFCLCCPRHRPV. 2 hydrophobic regions span residues 6 to 22 and 33 to 53; these read CALG…CLCC and AAVG…GLIL. Positions 6–22 are induction of host SIRPA expression; sequence CALGLFCCCSSCFCLCC. Residues 28-68 are interaction with host HPX; the sequence is VSRLAAAVGGAAAVPAVVSGVTGLILSPSQSPIFIQPTPSP. The tract at residues 48–72 is interaction with the capsid protein; sequence VTGLILSPSQSPIFIQPTPSPPMSP. S71 is subject to Phosphoserine; by host. The homodimerization, and interaction with host AMBP/bikunin stretch occupies residues 72-114; it reads PLRPGLDLVFANPPDHSAPLGVTRPSAPPLPHVVDLPQLGPRR. Positions 91–114 are disordered; that stretch reads LGVTRPSAPPLPHVVDLPQLGPRR. An interaction with host SRC, HCK, FYN, PIK3R3 and GRB2 region spans residues 95–104; it reads RPSAPPLPHV. The short motif at 96-99 is the PTAP/PSAP motif element; sequence PSAP.

Belongs to the hepevirus ORF3 protein family. As to quaternary structure, forms homooligomers. Interacts with host SRC, HCK, FYN, PIK3R3 and GRB2 (via SH3 domain); binding does not activate the kinases. Interacts with host AMBP/bikunin and AMBP/alpha-1-microglobulin peptides. Interacts with host HPX/hemopexin. Interacts (when phosphorylated) with capsid protein ORF2. Interacts with host TSG101; this interaction plays a role in viral release from the host cell. Interacts with host SIRPA; this interaction down-regulates the phosphorylation of host IRF3. Post-translationally, palmitoylated in the N-terminus.

It localises to the host endoplasmic reticulum membrane. The protein localises to the host cytoplasm. Its subcellular location is the host cytoskeleton. It is found in the virion. The protein resides in the host cell membrane. Small multifunctional phosphoprotein involved in virion morphogenesis, egress and counteracting host innate immunity. Plays critical roles in the final steps of viral release by interacting with host TSG101, a member of the vacuolar protein-sorting pathway and using other cellular host proteins involved in vesicle formation pathway. Also acts as a viroporin and forms ion conductive pores allowing viral particle release. Impairs the generation of type I interferon by down-regulating host TLR3 and TLR7 as well as their downstream signaling pathways. Down-regulates the phosphorylation of host IRF3 via the interaction with host SIRP-alpha, thereby inhibiting IFN-I expression. Interacts with host microtubules. The polypeptide is Protein ORF3 (Hepatitis E virus genotype 1 (isolate Human/China/HeBei/1987) (HEV)).